We begin with the raw amino-acid sequence, 1363 residues long: Zinc finger protein 541 (1363 aa).

Disordered regions lie at residues 1 to 23 (MEPY…SFSE) and 106 to 137 (LGAL…SPQN). C2H2-type zinc fingers lie at residues 140 to 162 (LDCS…YLTH), 168 to 190 (HVCK…MLTH), and 196 to 221 (FVCI…EVQH). Disordered stretches follow at residues 232–269 (EEEA…GSVL), 286–387 (KIPS…GWPE), 440–532 (VASR…PGGL), and 574–741 (QVAT…GYRL). Over residues 311–321 (SLGSSSCTPAS) the composition is skewed to polar residues. Residues 335-345 (EETHPPRKEAA) show a composition bias toward basic and acidic residues. Low complexity predominate over residues 453–465 (PSSTPTSVEPSPS). Over residues 597–608 (GPWPPQTLPPAP) the composition is skewed to pro residues. The segment covering 659–670 (PPSLTGPGLLPS) has biased composition (low complexity). The C2H2-type 4 zinc-finger motif lies at 838–860 (FVCKNCSQMFYTEKGLSSHMCFH). Residues 935 to 978 (QGQEKDGEERDSKESCQYRKRKKRPQPKALFAPPAPSALGEPGP) form a disordered region. The segment covering 937–951 (QEKDGEERDSKESCQ) has biased composition (basic and acidic residues). Residues 1063–1155 (PHINVGSRFQ…VALETLLLRG (93 aa)) form the ELM2 domain. One can recognise an SANT domain in the interval 1170 to 1221 (TGSDIWTPMEKRLFKKAFCAHKKDFYLIHKMIQTKSVAQCVEYYYIWKKMVK). The disordered stretch occupies residues 1243 to 1298 (RTEDKVTCSPRERPTHRPTPELKIKTKSYRRESILHSSPSAAPKRTPEPPGSVESQ). Residues 1244 to 1276 (TEDKVTCSPRERPTHRPTPELKIKTKSYRRESI) show a composition bias toward basic and acidic residues. Residues 1301–1323 (FPCRECERVFDKIKSRNAHMKRH) form a C2H2-type 5 zinc finger. A disordered region spans residues 1343-1363 (LKEEEEEEEEELGADMGPLQW). Acidic residues predominate over residues 1345 to 1355 (EEEEEEEEELG).

In terms of assembly, interacts with DNTTIP1. Identified in a complex with KCTD19, HDAC1 and HSPA2. Identified in a complex with HDAC1, HDAC2, DNTTIP1 and KCTD19. Identified in a complex with KCTD19 and HDAC1. Germ-cell-specific. Specifically present in testicular spermatogenic cells, but not in testicular and mature sperm. During spermatogenesis, it is present in spermatocytes and round spermatids only (at protein level).

The protein resides in the nucleus. Functionally, transcription regulator which is essential for male fertility and for the completion of meiotic prophase in spermatocytes. Regulates progression of the pachytene stage of meiotic prophase by activating the expression of genes involved in meiosis and post-meiosis during spermatogenesis. Maintains the repression of pre-pachytene transcriptional programs, including meiotic double-strand breaks (DSB) formation genes in pachytene spermatocytes and suppresses aberrant DSB formation after mid-pachytene, thus ensuring meiosis progression. In Mus musculus (Mouse), this protein is Zinc finger protein 541 (Znf541).